The following is a 545-amino-acid chain: Cytosolic Fe-S cluster assembly factor NAR1 (545 aa).

Positions 20, 74, 77, 80, 188, 243, 454, and 458 each coordinate [4Fe-4S] cluster.

It belongs to the NARF family.

Its function is as follows. Component of the cytosolic Fe/S protein assembly machinery. Required for maturation of extramitochondrial Fe/S proteins. May play a role in the transfer of pre-assembled Fe/S clusters to target apoproteins. This chain is Cytosolic Fe-S cluster assembly factor NAR1 (NAR1), found in Scheffersomyces stipitis (strain ATCC 58785 / CBS 6054 / NBRC 10063 / NRRL Y-11545) (Yeast).